The chain runs to 957 residues: Sorting nexin-13 (957 aa).

One can recognise a PXA domain in the interval 97 to 284; it reads ANIIDEPLQQ…YVIWMIRDSN (188 aa). Positions 373 to 511 constitute an RGS domain; that stretch reads PLDSILVDNV…SFRQNALYVR (139 aa). Residues 559 to 680 enclose the PX domain; it reads VQLHAYISDT…DFLENKAYSK (122 aa). A 1,2-diacyl-sn-glycero-3-phospho-(1D-myo-inositol-3-phosphate) is bound by residues arginine 601, serine 603, lysine 628, and arginine 642.

This sequence belongs to the sorting nexin family.

It localises to the early endosome membrane. Its function is as follows. May be involved in several stages of intracellular trafficking. Acts as a GAP for Galphas. May play a role in endosome homeostasis. This is Sorting nexin-13 (Snx13) from Mus musculus (Mouse).